We begin with the raw amino-acid sequence, 469 residues long: Neuraminidase (469 aa).

Topologically, residues 1 to 9 are intravirion; the sequence is MNPNQKIIT. Residues 10–30 form a helical membrane-spanning segment; the sequence is IGSVSLTIATVCFLMQIAILV. The segment at 11-33 is involved in apical transport and lipid raft association; it reads GSVSLTIATVCFLMQIAILVTTV. Residues 31–469 are Virion surface-facing; the sequence is TTVTLHFKQY…DGADINLMPI (439 aa). The hypervariable stalk region stretch occupies residues 36–88; sequence HFKQYECDSPANNQVMPCEPIIIERNITEIVYLTNTTIEKEICPKLVEYRNWS. N-linked (GlcNAc...) asparagine; by host glycans are attached at residues Asn61, Asn70, and Asn86. Residues 91–469 form a head of neuraminidase region; it reads QCKITGFAPF…DGADINLMPI (379 aa). Cystine bridges form between Cys92–Cys417, Cys124–Cys129, Cys183–Cys230, Cys232–Cys237, Cys278–Cys291, Cys280–Cys289, Cys318–Cys337, and Cys421–Cys447. Position 118 (Arg118) interacts with substrate. The N-linked (GlcNAc...) asparagine; by host glycan is linked to Asn146. The active-site Proton donor/acceptor is the Asp151. Arg152 contributes to the substrate binding site. Residues Asn200 and Asn234 are each glycosylated (N-linked (GlcNAc...) asparagine; by host). Position 276 to 277 (276 to 277) interacts with substrate; it reads EE. Arg292 lines the substrate pocket. Ca(2+) is bound by residues Asp293, Gly297, and Asp324. The interval 326–350 is disordered; that stretch reads PRNNDRSSNSNCRNPNNDKGNHGVK. The segment covering 331–343 has biased composition (low complexity); it reads RSSNSNCRNPNND. Arg371 is a substrate binding site. N-linked (GlcNAc...) asparagine; by host glycosylation is present at Asn402. Tyr406 functions as the Nucleophile in the catalytic mechanism.

The protein belongs to the glycosyl hydrolase 34 family. As to quaternary structure, homotetramer. Ca(2+) serves as cofactor. Post-translationally, N-glycosylated.

It is found in the virion membrane. It localises to the host apical cell membrane. The enzyme catalyses Hydrolysis of alpha-(2-&gt;3)-, alpha-(2-&gt;6)-, alpha-(2-&gt;8)- glycosidic linkages of terminal sialic acid residues in oligosaccharides, glycoproteins, glycolipids, colominic acid and synthetic substrates.. Its activity is regulated as follows. Inhibited by the neuraminidase inhibitors zanamivir (Relenza) and oseltamivir (Tamiflu). These drugs interfere with the release of progeny virus from infected cells and are effective against all influenza strains. Resistance to neuraminidase inhibitors is quite rare. Its function is as follows. Catalyzes the removal of terminal sialic acid residues from viral and cellular glycoconjugates. Cleaves off the terminal sialic acids on the glycosylated HA during virus budding to facilitate virus release. Additionally helps virus spread through the circulation by further removing sialic acids from the cell surface. These cleavages prevent self-aggregation and ensure the efficient spread of the progeny virus from cell to cell. Otherwise, infection would be limited to one round of replication. Described as a receptor-destroying enzyme because it cleaves a terminal sialic acid from the cellular receptors. May facilitate viral invasion of the upper airways by cleaving the sialic acid moieties on the mucin of the airway epithelial cells. Likely to plays a role in the budding process through its association with lipid rafts during intracellular transport. May additionally display a raft-association independent effect on budding. Plays a role in the determination of host range restriction on replication and virulence. Sialidase activity in late endosome/lysosome traffic seems to enhance virus replication. This chain is Neuraminidase, found in Aves (whales).